Reading from the N-terminus, the 99-residue chain is MAEKDIDKLLSMTDSKYRLSVVTAKRALQLRSGAPSVLPVEQRVRTRNLVTQAMRELATGKLTVGTSLLDEQRFHQDYVRQRQAQIQAQLNAERERERD.

The protein belongs to the RNA polymerase subunit omega family. In terms of assembly, the RNAP catalytic core consists of 2 alpha, 1 beta, 1 beta' and 1 omega subunit. When a sigma factor is associated with the core the holoenzyme is formed, which can initiate transcription.

The catalysed reaction is RNA(n) + a ribonucleoside 5'-triphosphate = RNA(n+1) + diphosphate. Functionally, promotes RNA polymerase assembly. Latches the N- and C-terminal regions of the beta' subunit thereby facilitating its interaction with the beta and alpha subunits. In Deinococcus deserti (strain DSM 17065 / CIP 109153 / LMG 22923 / VCD115), this protein is DNA-directed RNA polymerase subunit omega.